We begin with the raw amino-acid sequence, 300 residues long: N-acetylmannosamine kinase (300 aa).

ATP-binding positions include Ala-5–Lys-12 and Gly-132–Leu-139. Zn(2+) is bound by residues His-156, Cys-166, Cys-168, and Cys-173.

Belongs to the ROK (NagC/XylR) family. NanK subfamily. Homodimer.

The enzyme catalyses an N-acyl-D-mannosamine + ATP = an N-acyl-D-mannosamine 6-phosphate + ADP + H(+). The protein operates within amino-sugar metabolism; N-acetylneuraminate degradation; D-fructose 6-phosphate from N-acetylneuraminate: step 2/5. In terms of biological role, catalyzes the phosphorylation of N-acetylmannosamine (ManNAc) to ManNAc-6-P. The chain is N-acetylmannosamine kinase (nanK) from Haemophilus influenzae (strain ATCC 51907 / DSM 11121 / KW20 / Rd).